The sequence spans 129 residues: Ribosome-binding factor A (129 aa).

The protein belongs to the RbfA family. In terms of assembly, monomer. Binds 30S ribosomal subunits, but not 50S ribosomal subunits or 70S ribosomes.

The protein resides in the cytoplasm. Functionally, one of several proteins that assist in the late maturation steps of the functional core of the 30S ribosomal subunit. Associates with free 30S ribosomal subunits (but not with 30S subunits that are part of 70S ribosomes or polysomes). Required for efficient processing of 16S rRNA. May interact with the 5'-terminal helix region of 16S rRNA. This is Ribosome-binding factor A from Actinobacillus succinogenes (strain ATCC 55618 / DSM 22257 / CCUG 43843 / 130Z).